The following is a 175-amino-acid chain: GTP-dependent dephospho-CoA kinase (175 aa).

GTP-binding residues include Asp-48, Val-49, Val-50, Asp-66, and Glu-124.

This sequence belongs to the GTP-dependent DPCK family.

The enzyme catalyses 3'-dephospho-CoA + GTP = GDP + CoA + H(+). The protein operates within cofactor biosynthesis; coenzyme A biosynthesis. Functionally, catalyzes the GTP-dependent phosphorylation of the 3'-hydroxyl group of dephosphocoenzyme A to form coenzyme A (CoA). The sequence is that of GTP-dependent dephospho-CoA kinase from Thermofilum pendens (strain DSM 2475 / Hrk 5).